The chain runs to 333 residues: DNA-3-methyladenine glycosylase (333 aa).

A compositionally biased stretch (low complexity) spans 1 to 14 (MPARGGSARPGRGA). The disordered stretch occupies residues 1 to 42 (MPARGGSARPGRGALKPVSVTLLPDTEQPPFLGRARRPGNAR). Ser98 and Ser272 each carry phosphoserine.

Belongs to the DNA glycosylase MPG family. As to quaternary structure, binds MBD1. Binds SSBP1.

It localises to the cytoplasm. It is found in the mitochondrion matrix. The protein localises to the mitochondrion nucleoid. The protein resides in the nucleus. It catalyses the reaction Hydrolysis of alkylated DNA, releasing 3-methyladenine, 3-methylguanine, 7-methylguanine and 7-methyladenine.. Binding to SSBP1 in mitochondria inhibits glycosylase activity in the context of a single-stranded DNA (ssDNA), but not a double-stranded DNA (dsDNA) substrates. Hydrolysis of the deoxyribose N-glycosidic bond to excise 3-methyladenine, and 7-methylguanine from the damaged DNA polymer formed by alkylation lesions. In Mus musculus (Mouse), this protein is DNA-3-methyladenine glycosylase (Mpg).